We begin with the raw amino-acid sequence, 191 residues long: Thymidylate kinase (191 aa).

Residue 7-14 participates in ATP binding; it reads GVDGAGKS.

This sequence belongs to the thymidylate kinase family.

The catalysed reaction is dTMP + ATP = dTDP + ADP. In terms of biological role, phosphorylation of dTMP to form dTDP in both de novo and salvage pathways of dTTP synthesis. This chain is Thymidylate kinase, found in Helicobacter pylori (strain P12).